The primary structure comprises 336 residues: Phenylalanine--tRNA ligase alpha subunit (336 aa).

Residue E257 participates in Mg(2+) binding.

The protein belongs to the class-II aminoacyl-tRNA synthetase family. Phe-tRNA synthetase alpha subunit type 1 subfamily. In terms of assembly, tetramer of two alpha and two beta subunits. It depends on Mg(2+) as a cofactor.

It is found in the cytoplasm. It carries out the reaction tRNA(Phe) + L-phenylalanine + ATP = L-phenylalanyl-tRNA(Phe) + AMP + diphosphate + H(+). This Xanthomonas campestris pv. campestris (strain 8004) protein is Phenylalanine--tRNA ligase alpha subunit.